Here is a 448-residue protein sequence, read N- to C-terminus: Antilisterial bacteriocin subtilosin biosynthesis protein AlbA (448 aa).

The 215-residue stretch at Phe-115–Asp-329 folds into the Radical SAM core domain. Residues Cys-129, Cys-133, Cys-136, Cys-408, Cys-414, and Cys-417 each coordinate [4Fe-4S] cluster.

[4Fe-4S] cluster is required as a cofactor.

It is found in the cytoplasm. Catalyzes the formation of 3 thioether bonds during production of the sactipeptide subtilosin from SboA. In vitro the thioether bonds cannot be made in the absence of the SboA propeptide, suggesting this is the first reaction in subtilosin maturation. In vitro, in the absence of a second substrate, cleaves S-adenosyl-L-methionine into Met and 5'-dA. This is Antilisterial bacteriocin subtilosin biosynthesis protein AlbA (albA) from Bacillus subtilis (strain 168).